The following is a 137-amino-acid chain: Small ribosomal subunit protein bS6 (137 aa).

This sequence belongs to the bacterial ribosomal protein bS6 family.

In terms of biological role, binds together with bS18 to 16S ribosomal RNA. The protein is Small ribosomal subunit protein bS6 of Mycoplasma mycoides subsp. mycoides SC (strain CCUG 32753 / NCTC 10114 / PG1).